The sequence spans 468 residues: Protein maelstrom 2 (468 aa).

Positions 2 to 69 (PPKKHSGFMM…LTRVKKERLN (68 aa)) form a DNA-binding region, HMG box. The tract at residues 374–393 (KEDSPTVLSPASSRRSLASS) is disordered. Residues 381-393 (LSPASSRRSLASS) show a composition bias toward low complexity.

This sequence belongs to the maelstrom family.

It localises to the cytoplasm. It is found in the nucleus. Involved both in the piRNA and miRNA metabolic processes. As a component of the meiotic nuage, plays a central role during oogenesis by repressing transposable elements and preventing their mobilization, which is essential for the germline integrity. Repression of transposable elements is mediated via the piRNA metabolic process, which mediates the repression of transposable elements during meiosis by forming complexes composed of piRNAs and Piwi proteins and governs the repression of transposons. As a nuclear component, it is required for proper differentiation in the germline stem cell (GSC) lineage by repressing microRNA-7 (miR-7), thereby acting as an indirect regulator of bag-of-marbles (Bam). Acts by binding to the promoter of miR-7 gene and repressing its expression; miR-7 repression alleviates the Bam repression by miR-7, thereby allowing differentiation in the germline stem cell (GSC) lineage. The protein is Protein maelstrom 2 (mael2) of Drosophila ananassae (Fruit fly).